A 534-amino-acid chain; its full sequence is Beta-glucosidase 32 (534 aa).

A signal peptide spans 1-22 (MAIKLIALVITICVASWDSAQG). Glutamine 51 provides a ligand contact to a beta-D-glucoside. Asparagine 68 is a glycosylation site (N-linked (GlcNAc...) asparagine). Residues histidine 154 and 199–200 (NE) each bind a beta-D-glucoside. Glutamate 200 serves as the catalytic Proton donor. Cysteine 219 and cysteine 227 are oxidised to a cystine. Tyrosine 344 contacts a beta-D-glucoside. An N-linked (GlcNAc...) asparagine glycan is attached at asparagine 374. Glutamate 417 is a binding site for a beta-D-glucoside. Glutamate 417 (nucleophile) is an active-site residue. Asparagine 425 carries an N-linked (GlcNAc...) asparagine glycan. A beta-D-glucoside contacts are provided by residues tryptophan 467, 474-475 (EW), and phenylalanine 483.

Belongs to the glycosyl hydrolase 1 family.

It carries out the reaction Hydrolysis of terminal, non-reducing beta-D-glucosyl residues with release of beta-D-glucose.. In Arabidopsis thaliana (Mouse-ear cress), this protein is Beta-glucosidase 32.